Consider the following 112-residue polypeptide: Glutaredoxin-C6 (112 aa).

The 101-residue stretch at 3–103 (LAKAKETVAS…PLLTEAGAIA (101 aa)) folds into the Glutaredoxin domain. Residues Cys-23 and Cys-26 are joined by a disulfide bond.

Belongs to the glutaredoxin family. CPYC subfamily. Post-translationally, the N-terminus is blocked. Expressed in aleurone layer.

The protein localises to the cytoplasm. Functionally, has a glutathione-disulfide oxidoreductase activity in the presence of NADPH and glutathione reductase. Reduces low molecular weight disulfides and proteins. Possesses thioltransferase, dehydroascorbate reductase and GSH-dependent peroxidase activities in vitro. The protein is Glutaredoxin-C6 (GRXC6) of Oryza sativa subsp. japonica (Rice).